The following is a 414-amino-acid chain: Peptide chain release factor subunit 1 (414 aa).

This sequence belongs to the eukaryotic release factor 1 family. In terms of assembly, heterodimer of two subunits, one of which binds GTP.

It is found in the cytoplasm. Directs the termination of nascent peptide synthesis (translation) in response to the termination codons UAA, UAG and UGA. The polypeptide is Peptide chain release factor subunit 1 (Methanococcoides burtonii (strain DSM 6242 / NBRC 107633 / OCM 468 / ACE-M)).